A 514-amino-acid chain; its full sequence is Cytidine and dCMP deaminase domain-containing protein 1 (514 aa).

Composition is skewed to polar residues over residues 1-11 (MKEAGQMQNLE) and 18-27 (SVSTQTGSMT). Disordered stretches follow at residues 1–27 (MKEA…GSMT) and 55–83 (RQKS…TDKR). Positions 59–83 (QKNEEGKHGPLGDNEERTRVSTDKR) are enriched in basic and acidic residues. In terms of domain architecture, CMP/dCMP-type deaminase 1 spans 70-168 (GDNEERTRVS…SLLTEASSSE (99 aa)). Zn(2+)-binding residues include histidine 109, cysteine 134, and cysteine 137. The short motif at 271–283 (NLRQNMKDLILLL) is the Nuclear export signal element. Positions 317–482 (EIARHCMVQA…LNPSGAYGLE (166 aa)) constitute a CMP/dCMP-type deaminase 2 domain. Histidine 398 provides a ligand contact to Zn(2+). The Proton donor role is filled by glutamate 400. Zn(2+) is bound by residues cysteine 426 and cysteine 429. Residues 480-514 (GLEQNEPERRENGVLRPVPQKEEQHQDKKLRLGIH) form a disordered region. The segment covering 485-514 (EPERRENGVLRPVPQKEEQHQDKKLRLGIH) has biased composition (basic and acidic residues). Residues 488-510 (RRENGVLRPVPQKEEQHQDKKLR) carry the Bipartite nuclear localization signal motif.

This sequence belongs to the cytidine and deoxycytidylate deaminase family. Zn(2+) is required as a cofactor. In terms of tissue distribution, widely expressed. Expressed at high levels in the testis.

It localises to the cytoplasm. The protein localises to the nucleus. It carries out the reaction 2'-deoxycytidine + H2O + H(+) = 2'-deoxyuridine + NH4(+). The catalysed reaction is cytidine + H2O + H(+) = uridine + NH4(+). In terms of biological role, catalyzes the deamination of cytidine and deoxycytidine into uridine and deoxyuridine, respectively. May play an important role in testicular development and spermatogenesis. This Homo sapiens (Human) protein is Cytidine and dCMP deaminase domain-containing protein 1 (CDADC1).